Here is a 360-residue protein sequence, read N- to C-terminus: MAALSLKGVRKSYGGAQYVLHGIDVDIADGEFVVLVGPSGCGKSTLLRMIAGLETVTEGEIAIGGRVVNALEPKDRDIAMVFQNYALYPHMTVAQNMGYGLKIRGVERALIDARVQAAAQILELGPLLARRPRELSGGQRQRVAMGRAIVREPSVFLFDEPLSNLDAKLRVQMRLEIQRLHARLATTSVYVTHDQIEAMTLAQRVIVMNRGYAEQIGAPVDVYEKPATTFVASFIGSPAMNLLHGRLSEDGAAFDVADGPRLPVAGAAGAGRGIAPGREWILGVRPEHMTPQPGEAFATLAVDSCELLGADNLAHGRWGAHDVAVRLPHAMRPTRGETLPVALPARHLHFFDPATGKRAG.

One can recognise an ABC transporter domain in the interval 4 to 235; sequence LSLKGVRKSY…PATTFVASFI (232 aa). 37–44 serves as a coordination point for ATP; that stretch reads GPSGCGKS.

This sequence belongs to the ABC transporter superfamily. sn-glycerol-3-phosphate importer (TC 3.A.1.1.3) family. As to quaternary structure, the complex is composed of two ATP-binding proteins (UgpC), two transmembrane proteins (UgpA and UgpE) and a solute-binding protein (UgpB).

It is found in the cell inner membrane. The enzyme catalyses sn-glycerol 3-phosphate(out) + ATP + H2O = sn-glycerol 3-phosphate(in) + ADP + phosphate + H(+). In terms of biological role, part of the ABC transporter complex UgpBAEC involved in sn-glycerol-3-phosphate (G3P) import. Responsible for energy coupling to the transport system. The sequence is that of sn-glycerol-3-phosphate import ATP-binding protein UgpC from Burkholderia pseudomallei (strain K96243).